The following is a 434-amino-acid chain: Glutamate-1-semialdehyde 2,1-aminomutase 2 (434 aa).

Lysine 270 bears the N6-(pyridoxal phosphate)lysine mark.

Belongs to the class-III pyridoxal-phosphate-dependent aminotransferase family. HemL subfamily. Homodimer. Pyridoxal 5'-phosphate is required as a cofactor.

It is found in the cytoplasm. It carries out the reaction (S)-4-amino-5-oxopentanoate = 5-aminolevulinate. Its pathway is porphyrin-containing compound metabolism; protoporphyrin-IX biosynthesis; 5-aminolevulinate from L-glutamyl-tRNA(Glu): step 2/2. This chain is Glutamate-1-semialdehyde 2,1-aminomutase 2, found in Bacillus cereus (strain G9842).